A 1131-amino-acid polypeptide reads, in one-letter code: Filamin A-interacting protein 1-like (1131 aa).

A disordered region spans residues 1 to 62 (MRSRSSNAEG…KSHTGKGHHT (62 aa)). A compositionally biased stretch (basic and acidic residues) spans 50–62 (VSEKSHTGKGHHT). 2 coiled-coil regions span residues 139 to 583 (NELD…LSKV) and 610 to 780 (SKST…KSLR). A Phosphoserine modification is found at S789. T984 and T992 each carry phosphothreonine. Position 1050 is a phosphoserine (S1050).

It belongs to the FILIP1 family.

The protein resides in the cytoplasm. It localises to the membrane. Its subcellular location is the nucleus. Functionally, acts as a regulator of the antiangiogenic activity on endothelial cells. When overexpressed in endothelial cells, leads to inhibition of cell proliferation and migration and an increase in apoptosis. Inhibits melanoma growth When expressed in tumor-associated vasculature. This chain is Filamin A-interacting protein 1-like (Filip1l), found in Mus musculus (Mouse).